The primary structure comprises 258 residues: ATP synthase subunit a (258 aa).

5 helical membrane-spanning segments follow: residues 38–58 (KPVW…YVGA), 94–114 (WFPY…IGLF), 118–138 (YPVT…FVLT), 193–213 (ILAG…FGLP), and 215–235 (AFVS…VAVI).

The protein belongs to the ATPase A chain family. In terms of assembly, F-type ATPases have 2 components, CF(1) - the catalytic core - and CF(0) - the membrane proton channel. CF(1) has five subunits: alpha(3), beta(3), gamma(1), delta(1), epsilon(1). CF(0) has three main subunits: a(1), b(2) and c(9-12). The alpha and beta chains form an alternating ring which encloses part of the gamma chain. CF(1) is attached to CF(0) by a central stalk formed by the gamma and epsilon chains, while a peripheral stalk is formed by the delta and b chains.

The protein resides in the cell membrane. Key component of the proton channel; it plays a direct role in the translocation of protons across the membrane. This chain is ATP synthase subunit a, found in Rubrobacter xylanophilus (strain DSM 9941 / JCM 11954 / NBRC 16129 / PRD-1).